Reading from the N-terminus, the 422-residue chain is 5'-deoxyadenosine deaminase (422 aa).

The Zn(2+) site is built by histidine 57 and histidine 59. Substrate-binding residues include glutamate 86 and histidine 178. Histidine 205 contacts Zn(2+). Positions 208 and 294 each coordinate substrate. Aspartate 294 contacts Zn(2+).

Belongs to the metallo-dependent hydrolases superfamily. MTA/SAH deaminase family. In terms of assembly, homotetramer. Zn(2+) serves as cofactor.

It catalyses the reaction 5'-deoxyadenosine + H2O + H(+) = 5'-deoxyinosine + NH4(+). It carries out the reaction S-adenosyl-L-homocysteine + H2O + H(+) = S-inosyl-L-homocysteine + NH4(+). The enzyme catalyses S-methyl-5'-thioadenosine + H2O + H(+) = S-methyl-5'-thioinosine + NH4(+). The catalysed reaction is adenosine + H2O + H(+) = inosine + NH4(+). It participates in amino-acid biosynthesis; S-adenosyl-L-methionine biosynthesis. In terms of biological role, catalyzes the deamination of three SAM-derived enzymatic products, namely 5'-deoxyadenosine, S-adenosyl-L-homocysteine, and 5'-methylthioadenosine, to produce the inosine analogs. Can also deaminate adenosine. The preferred substrate for this enzyme is 5'-deoxyadenosine, but all these substrates are efficiently deaminated. Likely functions in a S-adenosyl-L-methionine (SAM) recycling pathway from S-adenosyl-L-homocysteine (SAH) produced from SAM-dependent methylation reactions. May also be involved in the recycling of 5'-deoxyadenosine, whereupon the 5'-deoxyribose moiety of 5'-deoxyinosine is further metabolized to deoxyhexoses used for the biosynthesis of aromatic amino acids in methanogens. The polypeptide is 5'-deoxyadenosine deaminase (Methanococcus maripaludis (strain C5 / ATCC BAA-1333)).